Here is a 620-residue protein sequence, read N- to C-terminus: Glutathione-regulated potassium-efflux system protein KefC (620 aa).

A run of 12 helical transmembrane segments spans residues 4 to 24, 26 to 46, 54 to 74, 90 to 110, 114 to 134, 149 to 169, 178 to 198, 218 to 238, 270 to 290, 294 to 314, 327 to 347, and 359 to 379; these read HTLL…PIAV, LGLG…PWGL, SILH…GLEL, GALQ…FLGL, VAEL…MQAM, FAVL…IPLL, LGAF…VVLL, VFSA…EEVG, GLLL…GTLV, LRIL…LWLV, WFAV…GAAQ, and ALTL…MLLT. Positions 399–518 constitute an RCK N-terminal domain; it reads QPRVIVAGFG…AGVAMPERET (120 aa). The tract at residues 599-620 is disordered; sequence QGTAEGKHSGEAADEPEVKPSI.

The protein belongs to the monovalent cation:proton antiporter 2 (CPA2) transporter (TC 2.A.37) family. KefC subfamily. In terms of assembly, homodimer. Interacts with the regulatory subunit KefF.

The protein resides in the cell inner membrane. In terms of biological role, pore-forming subunit of a potassium efflux system that confers protection against electrophiles. Catalyzes K(+)/H(+) antiport. The protein is Glutathione-regulated potassium-efflux system protein KefC of Salmonella heidelberg (strain SL476).